The following is a 543-amino-acid chain: Cytochrome P450 52A1 (543 aa).

Residues 1 to 28 (MSSSPSIAQEFLATITPYVEYCQENYTK) are Lumenal-facing. The helical transmembrane segment at 29 to 48 (WYYFIPLVILSLNLISMLHT) threads the bilayer. The Cytoplasmic portion of the chain corresponds to 49–543 (KYLERKFKAK…GAEVQMYLIL (495 aa)). Heme is bound at residue cysteine 487.

This sequence belongs to the cytochrome P450 family. It depends on heme as a cofactor.

Its subcellular location is the endoplasmic reticulum membrane. Functionally, together with an NADPH cytochrome P450 the enzyme system catalyzes the terminal hydroxylation as the first step in the assimilation of alkanes and fatty acids. This chain is Cytochrome P450 52A1 (CYP52A1), found in Candida tropicalis (Yeast).